The following is a 291-amino-acid chain: Shikimate dehydrogenase (NADP(+)) (291 aa).

Residues 14–16 and Thr-61 contribute to the shikimate site; that span reads SKS. Lys-65 serves as the catalytic Proton acceptor. NADP(+) is bound at residue Glu-77. Positions 86 and 102 each coordinate shikimate. Residues 139–143, 164–169, and Leu-232 contribute to the NADP(+) site; these read GAGGA and NRTFSR. Tyr-234 is a shikimate binding site. Gly-256 contacts NADP(+).

The protein belongs to the shikimate dehydrogenase family. As to quaternary structure, homodimer.

The enzyme catalyses shikimate + NADP(+) = 3-dehydroshikimate + NADPH + H(+). Its pathway is metabolic intermediate biosynthesis; chorismate biosynthesis; chorismate from D-erythrose 4-phosphate and phosphoenolpyruvate: step 4/7. In terms of biological role, involved in the biosynthesis of the chorismate, which leads to the biosynthesis of aromatic amino acids. Catalyzes the reversible NADPH linked reduction of 3-dehydroshikimate (DHSA) to yield shikimate (SA). The polypeptide is Shikimate dehydrogenase (NADP(+)) (Blochmanniella pennsylvanica (strain BPEN)).